A 237-amino-acid polypeptide reads, in one-letter code: Pyridoxine 5'-phosphate synthase (237 aa).

3-amino-2-oxopropyl phosphate contacts are provided by Asn-7 and Arg-18. His-43 functions as the Proton acceptor in the catalytic mechanism. Residues Arg-45 and His-50 each coordinate 1-deoxy-D-xylulose 5-phosphate. Glu-70 acts as the Proton acceptor in catalysis. Thr-100 contributes to the 1-deoxy-D-xylulose 5-phosphate binding site. The active-site Proton donor is the His-190. Residues Asp-191 and 213–214 (GH) each bind 3-amino-2-oxopropyl phosphate.

Belongs to the PNP synthase family. Homooctamer; tetramer of dimers.

The protein resides in the cytoplasm. It carries out the reaction 3-amino-2-oxopropyl phosphate + 1-deoxy-D-xylulose 5-phosphate = pyridoxine 5'-phosphate + phosphate + 2 H2O + H(+). It participates in cofactor biosynthesis; pyridoxine 5'-phosphate biosynthesis; pyridoxine 5'-phosphate from D-erythrose 4-phosphate: step 5/5. Functionally, catalyzes the complicated ring closure reaction between the two acyclic compounds 1-deoxy-D-xylulose-5-phosphate (DXP) and 3-amino-2-oxopropyl phosphate (1-amino-acetone-3-phosphate or AAP) to form pyridoxine 5'-phosphate (PNP) and inorganic phosphate. The chain is Pyridoxine 5'-phosphate synthase from Bacteroides thetaiotaomicron (strain ATCC 29148 / DSM 2079 / JCM 5827 / CCUG 10774 / NCTC 10582 / VPI-5482 / E50).